Here is a 62-residue protein sequence, read N- to C-terminus: Omega-lycotoxin-Am1e (62 aa).

Residues 1 to 15 constitute a propeptide that is removed on maturation; the sequence is EDEVEETLPVAEEGR. 4 cysteine pairs are disulfide-bonded: Cys19/Cys34, Cys26/Cys39, Cys33/Cys59, and Cys41/Cys57.

This sequence belongs to the neurotoxin omega-lctx family. Expressed by the venom gland.

The protein resides in the secreted. Modulates Cav2.1/CACNA1A voltage-gated calcium channels (P/Q-type currents) in rat cerebellar Purkinje cells and hippocampal CA1-CA3 neurons. At saturating concentrations (&gt;10 nM) decelerates activation kinetics and slightly increases peak amplitude without affecting deactivation kinetics. In vivo, does not cause death when intravenously injected into mice. In rat models, through its activity on Cav2.1/CACNA1A, has an ameliorative effect on memory defects provoked by hyperstimulation of N-methyl-D-aspartate receptors (NMDARs) in the hippocampus. This Alopecosa marikovskyi (Wolf spider) protein is Omega-lycotoxin-Am1e.